The primary structure comprises 132 residues: Small ribosomal subunit protein uS11 (132 aa).

This sequence belongs to the universal ribosomal protein uS11 family. Part of the 30S ribosomal subunit. Interacts with proteins S7 and S18. Binds to IF-3.

Located on the platform of the 30S subunit, it bridges several disparate RNA helices of the 16S rRNA. Forms part of the Shine-Dalgarno cleft in the 70S ribosome. The protein is Small ribosomal subunit protein uS11 of Chlamydia felis (strain Fe/C-56) (Chlamydophila felis).